The following is a 1196-amino-acid chain: Nucleolar protein 6 (1196 aa).

Disordered regions lie at residues 1–74 (MPGK…NVKP) and 1140–1196 (KREQ…KALK). Basic and acidic residues-rich tracts occupy residues 22–31 (HAEDHSDLEH) and 65–74 (HRGDTKNVKP). Residues 1165-1187 (KPKKHGKRKGTGKAAPPKKKRLI) are compositionally biased toward basic residues.

It belongs to the NRAP family. In terms of assembly, part of the small subunit (SSU) processome, composed of more than 70 proteins and the RNA chaperone small nucleolar RNA (snoRNA) U3.

The protein localises to the nucleus. Its subcellular location is the nucleolus. It is found in the chromosome. Functionally, part of the small subunit (SSU) processome, first precursor of the small eukaryotic ribosomal subunit. During the assembly of the SSU processome in the nucleolus, many ribosome biogenesis factors, an RNA chaperone and ribosomal proteins associate with the nascent pre-rRNA and work in concert to generate RNA folding, modifications, rearrangements and cleavage as well as targeted degradation of pre-ribosomal RNA by the RNA exosome. In Drosophila simulans (Fruit fly), this protein is Nucleolar protein 6.